The primary structure comprises 213 residues: ATP phosphoribosyltransferase (213 aa).

This sequence belongs to the ATP phosphoribosyltransferase family. Short subfamily. In terms of assembly, heteromultimer composed of HisG and HisZ subunits.

It localises to the cytoplasm. It catalyses the reaction 1-(5-phospho-beta-D-ribosyl)-ATP + diphosphate = 5-phospho-alpha-D-ribose 1-diphosphate + ATP. Its pathway is amino-acid biosynthesis; L-histidine biosynthesis; L-histidine from 5-phospho-alpha-D-ribose 1-diphosphate: step 1/9. Catalyzes the condensation of ATP and 5-phosphoribose 1-diphosphate to form N'-(5'-phosphoribosyl)-ATP (PR-ATP). Has a crucial role in the pathway because the rate of histidine biosynthesis seems to be controlled primarily by regulation of HisG enzymatic activity. The polypeptide is ATP phosphoribosyltransferase (hisG) (Listeria monocytogenes serovar 1/2a (strain ATCC BAA-679 / EGD-e)).